The primary structure comprises 1141 residues: cGMP-inhibited 3',5'-cyclic phosphodiesterase 3A (1141 aa).

Positions 1–42 (MAVRGEAAQDLAKPGLGGASPARVARGNHRHRGESSPSPRGS) are disordered. The chain crosses the membrane as a helical span at residues 62–82 (SALCAGSLSVLLALLVRLVGG). Positions 90 to 111 (KSQEAAAEEEEEEGARGGVFPG) are disordered. The next 5 helical transmembrane spans lie at 127-147 (LQPA…GLCL), 157-177 (AVAL…SLGV), 182-202 (LLSL…TWLV), 207-227 (LGVL…VSLE), and 229-249 (FKVA…LLLA). Ser310 bears the Phosphoserine mark. The segment covering 433–445 (RVSSTWTTTTSAT) has biased composition (low complexity). Residues 433 to 483 (RVSSTWTTTTSATGLPTLEPAPVRRDRSASIKPHEAPSPSAVNPDSWNAPG) form a disordered region. Basic and acidic residues predominate over residues 454–467 (PVRRDRSASIKPHE). Positions 472 to 483 (SAVNPDSWNAPG) are enriched in polar residues. 4 positions are modified to phosphoserine: Ser492, Ser520, Ser524, and Ser533. The disordered stretch occupies residues 505 to 654 (VKAKKQNRPG…CQREPQRKAS (150 aa)). The segment covering 522–532 (VPSPSSSPPQG) has biased composition (pro residues). The segment covering 533 to 544 (SPASSPVSNSAS) has biased composition (low complexity). Residues 618-637 (TSQVTSDYETNNNSDSSDIL) are compositionally biased toward polar residues. The tract at residues 669 to 1141 (KPILAPEPLV…EETLAPQPDL (473 aa)) is interaction with SLFN12. The region spanning 674 to 1093 (PEPLVMDNLD…MMWKKVIEEE (420 aa)) is the PDEase domain. His752 (proton donor) is an active-site residue. An AMP-binding site is contributed by His752. Mn(2+) contacts are provided by His756, His836, Asp837, and Asp950. AMP-binding residues include Asp837, Asp950, and Gln1001. Asp837 is a binding site for Mg(2+). Disordered regions lie at residues 1024–1060 (GKWV…SSIA) and 1120–1141 (KEEE…QPDL). Positions 1029-1046 (DSDDSGDTDDPEEEEEEA) are enriched in acidic residues. A Phosphoserine modification is found at Ser1033. Thr1036 carries the post-translational modification Phosphothreonine. Residue Lys1120 forms a Glycyl lysine isopeptide (Lys-Gly) (interchain with G-Cter in SUMO2) linkage.

This sequence belongs to the cyclic nucleotide phosphodiesterase family. PDE3 subfamily. Requires Mn(2+) as cofactor. Mg(2+) is required as a cofactor.

It localises to the membrane. It is found in the cytoplasm. The protein resides in the cytosol. It carries out the reaction a nucleoside 3',5'-cyclic phosphate + H2O = a nucleoside 5'-phosphate + H(+). The catalysed reaction is 3',5'-cyclic AMP + H2O = AMP + H(+). It catalyses the reaction 3',5'-cyclic GMP + H2O = GMP + H(+). The enzyme catalyses 3',5'-cyclic UMP + H2O = UMP + H(+). Inhibited by cGMP. In terms of biological role, cyclic nucleotide phosphodiesterase with specificity for the second messengers cAMP and cGMP, which are key regulators of many important physiological processes. Also has activity toward cUMP. Independently of its catalytic activity it is part of an E2/17beta-estradiol-induced pro-apoptotic signaling pathway. E2 stabilizes the PDE3A/SLFN12 complex in the cytosol, promoting the dephosphorylation of SLFN12 and activating its pro-apoptotic ribosomal RNA/rRNA ribonuclease activity. This apoptotic pathway might be relevant in tissues with high concentration of E2 and be for instance involved in placenta remodeling. The polypeptide is cGMP-inhibited 3',5'-cyclic phosphodiesterase 3A (Mus musculus (Mouse)).